Here is a 361-residue protein sequence, read N- to C-terminus: dTDP-glucose 4,6-dehydratase 1 (361 aa).

Residues 11-12, 32-35, 58-59, 80-84, and Thr-99 contribute to the NAD(+) site; these read FI, DKLT, DI, and LAAES. Ser-84 serves as a coordination point for substrate. Thr-133 serves as a coordination point for substrate. The Proton donor role is filled by Asp-134. Residues Glu-135 and Tyr-167 each act as proton acceptor in the active site. An NAD(+)-binding site is contributed by 167-171; sequence YSASK. Substrate is bound at residue Asn-196. Asn-197 provides a ligand contact to NAD(+). Substrate is bound by residues 206–207, 222–224, Arg-231, Asn-266, and 296–300; these read KL, PIY, and DRPGH.

It belongs to the NAD(P)-dependent epimerase/dehydratase family. dTDP-glucose dehydratase subfamily. As to quaternary structure, homodimer. It depends on NAD(+) as a cofactor.

It carries out the reaction dTDP-alpha-D-glucose = dTDP-4-dehydro-6-deoxy-alpha-D-glucose + H2O. Its pathway is carbohydrate biosynthesis; dTDP-L-rhamnose biosynthesis. It participates in bacterial outer membrane biogenesis; LPS O-antigen biosynthesis. Functionally, catalyzes the dehydration of dTDP-D-glucose to form dTDP-6-deoxy-D-xylo-4-hexulose via a three-step process involving oxidation, dehydration and reduction. The protein is dTDP-glucose 4,6-dehydratase 1 (rfbB) of Escherichia coli (strain K12).